A 504-amino-acid chain; its full sequence is Maturase K (504 aa).

This sequence belongs to the intron maturase 2 family. MatK subfamily.

It is found in the plastid. The protein localises to the chloroplast. Functionally, usually encoded in the trnK tRNA gene intron. Probably assists in splicing its own and other chloroplast group II introns. The chain is Maturase K from Actinidia deliciosa (Kiwi).